The chain runs to 172 residues: CD164 sialomucin-like 2 protein (172 aa).

A signal peptide spans 1 to 29 (MAAPGPRALRAALCGGCCCLLLCAQLVLA). At 30 to 137 (GKGARGFGRG…PEDHSPGFDG (108 aa)) the chain is on the extracellular side. N-linked (GlcNAc...) asparagine glycans are attached at residues asparagine 69 and asparagine 101. Residues 108 to 132 (ASHHHSTEEPKPSTTGSPPIPEDHS) form a disordered region. A helical membrane pass occupies residues 138 to 158 (ASFIGGIVLVLSLQATAFFVL). At 159–172 (RFLKAKDSTYQTLI) the chain is on the cytoplasmic side.

Belongs to the CD164 family.

Its subcellular location is the membrane. The polypeptide is CD164 sialomucin-like 2 protein (Cd164l2) (Mus musculus (Mouse)).